Here is a 652-residue protein sequence, read N- to C-terminus: Acetyl-coenzyme A synthetase (652 aa).

CoA-binding positions include 191 to 194, Thr311, and Asn335; that span reads RAGR. ATP-binding positions include 387–389, 411–416, Asp500, and Arg515; these read GEP and DTWWQT. Residue Ser523 participates in CoA binding. Residue Arg526 participates in ATP binding. 3 residues coordinate Mg(2+): Val537, His539, and Ile542. Arg584 contributes to the CoA binding site. Lys609 is subject to N6-acetyllysine.

The protein belongs to the ATP-dependent AMP-binding enzyme family. Requires Mg(2+) as cofactor. In terms of processing, acetylated. Deacetylation by the SIR2-homolog deacetylase activates the enzyme.

It carries out the reaction acetate + ATP + CoA = acetyl-CoA + AMP + diphosphate. Its function is as follows. Catalyzes the conversion of acetate into acetyl-CoA (AcCoA), an essential intermediate at the junction of anabolic and catabolic pathways. Acs undergoes a two-step reaction. In the first half reaction, Acs combines acetate with ATP to form acetyl-adenylate (AcAMP) intermediate. In the second half reaction, it can then transfer the acetyl group from AcAMP to the sulfhydryl group of CoA, forming the product AcCoA. Functionally, enables the cell to use acetate during aerobic growth to generate energy via the TCA cycle, and biosynthetic compounds via the glyoxylate shunt. Acetylates CheY, the response regulator involved in flagellar movement and chemotaxis. The sequence is that of Acetyl-coenzyme A synthetase from Yersinia pestis.